The following is a 96-amino-acid chain: Cysteine proteinase (96 aa).

Residues C25 and C79 are joined by a disulfide bond. Active-site residues include H31 and N58.

The protein belongs to the peptidase C1 family.

The sequence is that of Cysteine proteinase from Carica papaya (Papaya).